The sequence spans 431 residues: Adenylosuccinate synthetase (431 aa).

GTP is bound by residues 13–19 (GDEGKGK) and 41–43 (GHT). The active-site Proton acceptor is D14. Positions 14 and 41 each coordinate Mg(2+). IMP-binding positions include 14–17 (DEGK), 39–42 (NAGH), T130, R144, Q225, T240, and R304. H42 (proton donor) is an active-site residue. Residue 300–306 (SVTGRPR) coordinates substrate. Residues R306, 332-334 (KLD), and 414-416 (STG) each bind GTP.

This sequence belongs to the adenylosuccinate synthetase family. Homodimer. Mg(2+) serves as cofactor.

It localises to the cytoplasm. The enzyme catalyses IMP + L-aspartate + GTP = N(6)-(1,2-dicarboxyethyl)-AMP + GDP + phosphate + 2 H(+). It functions in the pathway purine metabolism; AMP biosynthesis via de novo pathway; AMP from IMP: step 1/2. Plays an important role in the de novo pathway of purine nucleotide biosynthesis. Catalyzes the first committed step in the biosynthesis of AMP from IMP. This Bordetella avium (strain 197N) protein is Adenylosuccinate synthetase.